The sequence spans 270 residues: Chlorophyll a-b binding protein 7, chloroplastic (270 aa).

Residues 1–42 (MASACASSTIAAVAFSSPSSRRNGSIVGTTKASFLGGRRLRV) constitute a chloroplast transit peptide. Position 68 (Trp-68) interacts with chlorophyll b. Residues Phe-88, Glu-107, and His-110 each contribute to the chlorophyll a site. Arg-112 contributes to the chlorophyll b binding site. The helical transmembrane segment at 113 to 133 (WAMLGAAGIFIPELLTKIGIL) threads the bilayer. Residue Gln-144 participates in chlorophyll a binding. Residues 146–166 (YFTDTTTLFIVELVLIGWAEG) traverse the membrane as a helical segment. Positions 155, 165, and 168 each coordinate chlorophyll b. Positions 221, 222, 225, 227, 239, and 254 each coordinate chlorophyll a. The chain crosses the membrane as a helical span at residues 228–248 (LAMLAVMGAWFQHIYTGTGPI).

Belongs to the light-harvesting chlorophyll a/b-binding (LHC) protein family. The LHC complex consists of chlorophyll a-b binding proteins. Binds at least 14 chlorophylls (8 Chl-a and 6 Chl-b) and carotenoids such as lutein and neoxanthin. serves as cofactor. Photoregulated by reversible phosphorylation of its threonine residues.

Its subcellular location is the plastid. It is found in the chloroplast thylakoid membrane. The light-harvesting complex (LHC) functions as a light receptor, it captures and delivers excitation energy to photosystems with which it is closely associated. In Solanum lycopersicum (Tomato), this protein is Chlorophyll a-b binding protein 7, chloroplastic (CAB7).